Consider the following 130-residue polypeptide: Small ribosomal subunit protein uS9 (130 aa).

Belongs to the universal ribosomal protein uS9 family.

This chain is Small ribosomal subunit protein uS9, found in Clostridium beijerinckii (strain ATCC 51743 / NCIMB 8052) (Clostridium acetobutylicum).